Reading from the N-terminus, the 447-residue chain is Enolase (447 aa).

(2R)-2-phosphoglycerate is bound at residue Gln-168. Glu-210 serves as the catalytic Proton donor. The Mg(2+) site is built by Asp-247, Glu-292, and Asp-319. (2R)-2-phosphoglycerate-binding residues include Lys-344, Arg-373, Ser-374, and Lys-395. The Proton acceptor role is filled by Lys-344.

It belongs to the enolase family. As to quaternary structure, component of the RNA degradosome, a multiprotein complex involved in RNA processing and mRNA degradation. The cofactor is Mg(2+).

Its subcellular location is the cytoplasm. The protein resides in the secreted. It is found in the cell surface. It catalyses the reaction (2R)-2-phosphoglycerate = phosphoenolpyruvate + H2O. It participates in carbohydrate degradation; glycolysis; pyruvate from D-glyceraldehyde 3-phosphate: step 4/5. Its function is as follows. Catalyzes the reversible conversion of 2-phosphoglycerate (2-PG) into phosphoenolpyruvate (PEP). It is essential for the degradation of carbohydrates via glycolysis. The protein is Enolase of Blochmanniella floridana.